Consider the following 128-residue polypeptide: Holo-[acyl-carrier-protein] synthase (128 aa).

Residues aspartate 8 and glutamate 58 each coordinate Mg(2+).

The protein belongs to the P-Pant transferase superfamily. AcpS family. Mg(2+) serves as cofactor.

The protein resides in the cytoplasm. It catalyses the reaction apo-[ACP] + CoA = holo-[ACP] + adenosine 3',5'-bisphosphate + H(+). Transfers the 4'-phosphopantetheine moiety from coenzyme A to a Ser of acyl-carrier-protein. The chain is Holo-[acyl-carrier-protein] synthase from Alkalilimnicola ehrlichii (strain ATCC BAA-1101 / DSM 17681 / MLHE-1).